Consider the following 193-residue polypeptide: Xanthine phosphoribosyltransferase (193 aa).

The xanthine site is built by Leu20 and Thr27. Ala128–Ala132 is a binding site for 5-phospho-alpha-D-ribose 1-diphosphate. Position 156 (Lys156) interacts with xanthine.

This sequence belongs to the purine/pyrimidine phosphoribosyltransferase family. Xpt subfamily. As to quaternary structure, homodimer.

The protein resides in the cytoplasm. It carries out the reaction XMP + diphosphate = xanthine + 5-phospho-alpha-D-ribose 1-diphosphate. Its pathway is purine metabolism; XMP biosynthesis via salvage pathway; XMP from xanthine: step 1/1. Its function is as follows. Converts the preformed base xanthine, a product of nucleic acid breakdown, to xanthosine 5'-monophosphate (XMP), so it can be reused for RNA or DNA synthesis. The sequence is that of Xanthine phosphoribosyltransferase from Streptococcus equi subsp. equi (strain 4047).